A 388-amino-acid polypeptide reads, in one-letter code: Palmitoyltransferase ZDHHC18-B (388 aa).

The disordered stretch occupies residues 1–33 (MKNREYQQIDPQALATPTPTPPPRSLPEHKPRR). At 1 to 58 (MKNREYQQIDPQALATPTPTPPPRSLPEHKPRRARRKWEVFPGKNRFYCDGRIIVARQ) the chain is on the cytoplasmic side. A helical membrane pass occupies residues 59-79 (SGVLPLTLGLILLTSGLFFIF). Over 80–87 (DCPFLVKH) the chain is Lumenal. A helical transmembrane segment spans residues 88–108 (LTSCIPAIGGVLFVFVIISLL). Residues 109-205 (QTSFTDPGIL…GNCVGKRNYR (97 aa)) lie on the Cytoplasmic side of the membrane. The DHHC domain maps to 162-212 (KYCFTCKIFRPPRTSHCSLCDNCVERFDHHCPWVGNCVGKRNYRFFYTFIV). Cys192 serves as the catalytic S-palmitoyl cysteine intermediate. The chain crosses the membrane as a helical span at residues 206–226 (FFYTFIVSLSFLTAFIFGCVT). Residues 227–253 (THLALRSQGGNGLVNALQSSPASALEL) are Lumenal-facing. The chain crosses the membrane as a helical span at residues 254-274 (VVCFFSVWSILGLSGFHTYLV). The Cytoplasmic segment spans residues 275-388 (AANLTTNEDI…AISMQNHSTA (114 aa)).

The protein belongs to the DHHC palmitoyltransferase family. ERF2/ZDHHC9 subfamily.

It localises to the golgi apparatus membrane. It carries out the reaction L-cysteinyl-[protein] + hexadecanoyl-CoA = S-hexadecanoyl-L-cysteinyl-[protein] + CoA. Its function is as follows. Palmitoyltransferase that catalyzes the addition of palmitate onto various protein substrates, such as CGAS, HRAS and LCK. The chain is Palmitoyltransferase ZDHHC18-B from Danio rerio (Zebrafish).